A 372-amino-acid chain; its full sequence is 4-hydroxy-3-methylbut-2-en-1-yl diphosphate synthase (flavodoxin) (372 aa).

Positions 270, 273, 305, and 312 each coordinate [4Fe-4S] cluster.

It belongs to the IspG family. [4Fe-4S] cluster serves as cofactor.

The enzyme catalyses (2E)-4-hydroxy-3-methylbut-2-enyl diphosphate + oxidized [flavodoxin] + H2O + 2 H(+) = 2-C-methyl-D-erythritol 2,4-cyclic diphosphate + reduced [flavodoxin]. The protein operates within isoprenoid biosynthesis; isopentenyl diphosphate biosynthesis via DXP pathway; isopentenyl diphosphate from 1-deoxy-D-xylulose 5-phosphate: step 5/6. In terms of biological role, converts 2C-methyl-D-erythritol 2,4-cyclodiphosphate (ME-2,4cPP) into 1-hydroxy-2-methyl-2-(E)-butenyl 4-diphosphate. This chain is 4-hydroxy-3-methylbut-2-en-1-yl diphosphate synthase (flavodoxin), found in Vibrio parahaemolyticus serotype O3:K6 (strain RIMD 2210633).